The following is a 330-amino-acid chain: Type II methyltransferase M.MthTI (330 aa).

In terms of domain architecture, SAM-dependent MTase C5-type spans 3 to 328 (MDIASFFSGA…KKIKKDLEGV (326 aa)). Residue C73 is part of the active site.

The protein belongs to the class I-like SAM-binding methyltransferase superfamily. C5-methyltransferase family.

The enzyme catalyses a 2'-deoxycytidine in DNA + S-adenosyl-L-methionine = a 5-methyl-2'-deoxycytidine in DNA + S-adenosyl-L-homocysteine + H(+). In terms of biological role, a methylase that recognizes the double-stranded sequence 5'-GGCC-3', methylates C-3 on both strands, and protects the DNA from cleavage by the MthTI endonuclease. This is Type II methyltransferase M.MthTI (mthTIM) from Methanothermobacter thermautotrophicus (Methanobacterium thermoformicicum).